Here is a 202-residue protein sequence, read N- to C-terminus: Guanylyl cyclase-activating protein 1 (202 aa).

The N-myristoyl glycine moiety is linked to residue glycine 2. Deamidated asparagine is present on asparagine 3. EF-hand domains are found at residues 31 to 49 (SGQL…KNLS), 51 to 86 (SASQ…VLKG), 87 to 122 (KVEQ…IRTI), and 131 to 166 (SAEE…DQML). Ca(2+) is bound by residues aspartate 64, asparagine 66, aspartate 68, tyrosine 70, glutamate 75, aspartate 100, aspartate 102, asparagine 104, cysteine 106, glutamate 111, aspartate 144, asparagine 146, aspartate 148, glutamate 150, and glutamate 155.

In terms of assembly, homodimer. In terms of tissue distribution, in the retina, expressed in rod photoreceptors (at protein level). Expressed in cone photoreceptors.

The protein localises to the membrane. It is found in the photoreceptor inner segment. Its subcellular location is the cell projection. The protein resides in the cilium. It localises to the photoreceptor outer segment. Its function is as follows. Stimulates retinal guanylyl cyclase when free calcium ions concentration is low and inhibits guanylyl cyclase when free calcium ions concentration is elevated. This Ca(2+)-sensitive regulation of retinal guanylyl cyclase is a key event in recovery of the dark state of rod photoreceptors following light exposure. May be involved in cone photoreceptor light response and recovery of response in bright light. This is Guanylyl cyclase-activating protein 1 (Guca1a) from Mus musculus (Mouse).